Consider the following 111-residue polypeptide: Probable 4-amino-4-deoxy-L-arabinose-phosphoundecaprenol flippase subunit ArnE (111 aa).

3 consecutive transmembrane segments (helical) span residues 38-58 (LWLGLALICMGAAMVLWLLVL), 61-81 (LPVGIAYPMLSLNFVWVTLAA), and 91-111 (PRHWFGVALIISGIIILGSAA). The EamA domain occupies 40–109 (LGLALICMGA…IISGIIILGS (70 aa)).

The protein belongs to the ArnE family. As to quaternary structure, heterodimer of ArnE and ArnF.

Its subcellular location is the cell inner membrane. The protein operates within bacterial outer membrane biogenesis; lipopolysaccharide biosynthesis. Its function is as follows. Translocates 4-amino-4-deoxy-L-arabinose-phosphoundecaprenol (alpha-L-Ara4N-phosphoundecaprenol) from the cytoplasmic to the periplasmic side of the inner membrane. In Salmonella enteritidis PT4 (strain P125109), this protein is Probable 4-amino-4-deoxy-L-arabinose-phosphoundecaprenol flippase subunit ArnE.